The chain runs to 487 residues: Ribulose bisphosphate carboxylase large chain (487 aa).

Asparagine 127 and threonine 177 together coordinate substrate. The active-site Proton acceptor is lysine 179. Lysine 181 is a substrate binding site. The Mg(2+) site is built by lysine 205, aspartate 207, and glutamate 208. Lysine 205 carries the post-translational modification N6-carboxylysine. Catalysis depends on histidine 297, which acts as the Proton acceptor. Substrate contacts are provided by arginine 298, histidine 330, and serine 382.

The protein belongs to the RuBisCO large chain family. Type I subfamily. Heterohexadecamer of 8 large chains and 8 small chains. It depends on Mg(2+) as a cofactor.

The catalysed reaction is 2 (2R)-3-phosphoglycerate + 2 H(+) = D-ribulose 1,5-bisphosphate + CO2 + H2O. The enzyme catalyses D-ribulose 1,5-bisphosphate + O2 = 2-phosphoglycolate + (2R)-3-phosphoglycerate + 2 H(+). In terms of biological role, ruBisCO catalyzes two reactions: the carboxylation of D-ribulose 1,5-bisphosphate, the primary event in carbon dioxide fixation, as well as the oxidative fragmentation of the pentose substrate. Both reactions occur simultaneously and in competition at the same active site. This is Ribulose bisphosphate carboxylase large chain from Paracoccus denitrificans (strain Pd 1222).